The chain runs to 1166 residues: ATP-dependent helicase/deoxyribonuclease subunit B (1166 aa).

The UvrD-like helicase ATP-binding domain occupies 1–290 (MGMRFILGRS…DTLEGNFQNR (290 aa)). 8–15 (GRSGTNKS) provides a ligand contact to ATP. The UvrD-like helicase C-terminal domain maps to 283-588 (LEGNFQNRPY…QFSHVPPSMD (306 aa)). 4 residues coordinate [4Fe-4S] cluster: Cys-802, Cys-1123, Cys-1126, and Cys-1132.

The protein belongs to the helicase family. AddB/RexB type 1 subfamily. In terms of assembly, heterodimer of AddA and AddB. Requires Mg(2+) as cofactor. The cofactor is [4Fe-4S] cluster.

Its function is as follows. The heterodimer acts as both an ATP-dependent DNA helicase and an ATP-dependent, dual-direction single-stranded exonuclease. Recognizes the chi site generating a DNA molecule suitable for the initiation of homologous recombination. The AddB subunit has 5' -&gt; 3' nuclease activity but not helicase activity. This is ATP-dependent helicase/deoxyribonuclease subunit B from Oceanobacillus iheyensis (strain DSM 14371 / CIP 107618 / JCM 11309 / KCTC 3954 / HTE831).